Reading from the N-terminus, the 468-residue chain is MQNMMNTSQSFQNDSVLIGDKNTLQSINKSVDNGSKNTHGITGIMNLGNTCYMNSALQALSHNYLLINYLFMNKKQIIRTLLTNARKIFKDCDNFKIESTISPIPLELRKKIQSENYHLSMLTVEDVNILLNNTITAQIIRLFECMWKNNCVVVPTSFRKVFGEVRDKFFFGYEQHDAEEAYSCIIQKMQEELAEKRTIRFKTTRHSVGEYIKYMNDVKEKVSCLPNGKEKDIVMNKFKQIKKQMPRESLTAESFREMKKYYEQGYSYITEIFSGYVHSSICCPNTSCGFTNDRFDAFTHLSLSIPVKNMYEQLNVYDCLREYFSQETLDADNLWNCEGCHEKVQAIKKTKLWTTPYVLVIQFKRFGMTRIAKDNRFINYPMDELDVSSVICSQQFEDSVQTKYKLQCVINHHGGLNNGHYFTYSKIENTGEWYEFNDTYTGKVTDNHIVNQNAYILFYIRSDLFRSQ.

Residues 42 to 462 (TGIMNLGNTC…NAYILFYIRS (421 aa)) enclose the USP domain. The active-site Nucleophile is the C51. H420 acts as the Proton acceptor in catalysis.

Belongs to the peptidase C19 family.

The catalysed reaction is Thiol-dependent hydrolysis of ester, thioester, amide, peptide and isopeptide bonds formed by the C-terminal Gly of ubiquitin (a 76-residue protein attached to proteins as an intracellular targeting signal).. The polypeptide is Probable ubiquitin carboxyl-terminal hydrolase R319 (Acanthamoeba polyphaga (Amoeba)).